Reading from the N-terminus, the 848-residue chain is Translation initiation factor IF-2 (848 aa).

The interval 90–253 (RTYIKRAELQ…PKEKRHAFER (164 aa)) is disordered. Positions 105–170 (EAPAPEEPVQ…SAEPAIAPED (66 aa)) are enriched in low complexity. Composition is skewed to basic residues over residues 204–215 (PKKKQAGHRGPR) and 236–248 (KPLR…KEKR). The tr-type G domain occupies 344–511 (KRAPVVSVMG…AVLLQAEILE (168 aa)). A G1 region spans residues 353–360 (GHVDHGKT). 353–360 (GHVDHGKT) serves as a coordination point for GTP. The G2 stretch occupies residues 378–382 (GITQH). The tract at residues 399–402 (DTPG) is G3. Residues 399–403 (DTPGH) and 453–456 (NKMD) each bind GTP. The G4 stretch occupies residues 453–456 (NKMD). The interval 489–491 (SAH) is G5.

This sequence belongs to the TRAFAC class translation factor GTPase superfamily. Classic translation factor GTPase family. IF-2 subfamily.

The protein localises to the cytoplasm. Functionally, one of the essential components for the initiation of protein synthesis. Protects formylmethionyl-tRNA from spontaneous hydrolysis and promotes its binding to the 30S ribosomal subunits. Also involved in the hydrolysis of GTP during the formation of the 70S ribosomal complex. This chain is Translation initiation factor IF-2, found in Marinobacter nauticus (strain ATCC 700491 / DSM 11845 / VT8) (Marinobacter aquaeolei).